The chain runs to 85 residues: Conotoxin Im28.1 (85 aa).

The first 21 residues, methionine 1–alanine 21, serve as a signal peptide directing secretion. Positions valine 22–lysine 40 are excised as a propeptide.

Belongs to the conotoxin D superfamily. Post-translationally, contains 5 disulfide bonds. In terms of tissue distribution, expressed by the venom duct.

Its subcellular location is the secreted. Its function is as follows. Probable neurotoxin. The polypeptide is Conotoxin Im28.1 (Conus imperialis (Imperial cone)).